The sequence spans 687 residues: Threonine--tRNA ligase (687 aa).

In terms of domain architecture, TGS spans 1-67 (MAHLIEAAPN…EQDSKFTPVP (67 aa)). A catalytic region spans residues 266–572 (DHRRLGAELD…LLEHYAGAFP (307 aa)). Zn(2+) is bound by residues C371, H422, and H549.

Belongs to the class-II aminoacyl-tRNA synthetase family. Homodimer. It depends on Zn(2+) as a cofactor.

Its subcellular location is the cytoplasm. It carries out the reaction tRNA(Thr) + L-threonine + ATP = L-threonyl-tRNA(Thr) + AMP + diphosphate + H(+). Catalyzes the attachment of threonine to tRNA(Thr) in a two-step reaction: L-threonine is first activated by ATP to form Thr-AMP and then transferred to the acceptor end of tRNA(Thr). Also edits incorrectly charged L-seryl-tRNA(Thr). This is Threonine--tRNA ligase from Corynebacterium diphtheriae (strain ATCC 700971 / NCTC 13129 / Biotype gravis).